We begin with the raw amino-acid sequence, 455 residues long: Phosphoglucosamine mutase (455 aa).

The active-site Phosphoserine intermediate is serine 108. Residues serine 108, aspartate 246, aspartate 248, and aspartate 250 each contribute to the Mg(2+) site. At serine 108 the chain carries Phosphoserine.

Belongs to the phosphohexose mutase family. Requires Mg(2+) as cofactor. Post-translationally, activated by phosphorylation.

The catalysed reaction is alpha-D-glucosamine 1-phosphate = D-glucosamine 6-phosphate. In terms of biological role, catalyzes the conversion of glucosamine-6-phosphate to glucosamine-1-phosphate. The polypeptide is Phosphoglucosamine mutase (Frankia casuarinae (strain DSM 45818 / CECT 9043 / HFP020203 / CcI3)).